Reading from the N-terminus, the 360-residue chain is Peptide chain release factor 1 (360 aa).

Glutamine 235 bears the N5-methylglutamine mark. The segment covering 280-293 (DKQSHEQQAKEAAT) has biased composition (basic and acidic residues). A disordered region spans residues 280 to 300 (DKQSHEQQAKEAATRKSLIGS).

Belongs to the prokaryotic/mitochondrial release factor family. Methylated by PrmC. Methylation increases the termination efficiency of RF1.

It localises to the cytoplasm. In terms of biological role, peptide chain release factor 1 directs the termination of translation in response to the peptide chain termination codons UAG and UAA. This Paraburkholderia phytofirmans (strain DSM 17436 / LMG 22146 / PsJN) (Burkholderia phytofirmans) protein is Peptide chain release factor 1.